A 436-amino-acid polypeptide reads, in one-letter code: GTPase Der (436 aa).

EngA-type G domains follow at residues 4 to 167 (PTVA…PVEE) and 175 to 351 (IRFS…ESQN). Residues 10 to 17 (GRPNVGKS), 57 to 61 (DTGGI), 119 to 122 (NKVD), 181 to 188 (GRPNVGKS), 229 to 233 (DTAGM), and 294 to 297 (NKWD) contribute to the GTP site. A KH-like domain is found at 352–436 (KRIPSAVLND…PINLIARKRK (85 aa)).

The protein belongs to the TRAFAC class TrmE-Era-EngA-EngB-Septin-like GTPase superfamily. EngA (Der) GTPase family. Associates with the 50S ribosomal subunit.

Its function is as follows. GTPase that plays an essential role in the late steps of ribosome biogenesis. This is GTPase Der from Streptococcus agalactiae serotype Ia (strain ATCC 27591 / A909 / CDC SS700).